Here is a 205-residue protein sequence, read N- to C-terminus: Mitotic spindle assembly checkpoint protein MAD2A (205 aa).

At A2 the chain carries N-acetylalanine. The 184-residue stretch at 14–197 (RGSAEIVAEF…TTIHKVNSMV (184 aa)) folds into the HORMA domain. 4 positions are modified to phosphoserine: S130, S170, S185, and S195. Residues 195-205 (SMVAYKTPVND) form a required for assuming the closed conformation and for interaction with CDC20 region.

Belongs to the MAD2 family. As to quaternary structure, monomer and homodimer. Heterodimerizes with MAD2L1 in order to form a tetrameric MAD1L1-MAD2L1 core complex. In the closed and open conformation, interacts with MAD1L1. Formation of a heterotetrameric core complex containing two molecules each of MAD1L1 and of MAD2L1 promotes binding of another molecule of MAD2L1 to each MAD2L1, resulting in a heterohexamer. Interacts with MAD2L1BP. Interacts with ADAM17/TACE. Interacts with CDC20. Dimeric MAD2L1 in the closed conformation interacts with CDC20. Monomeric MAD2L1 in the open conformation does not interact with CDC20. CDC20 competes with MAD1L1 for MAD2L1 binding. In the closed conformation, interacts with BUB1B. Interacts with TTK. Interacts with TPR. Binds to UBD (via ubiquitin-like 1 domain) during mitosis. Interacts with isoform 1 and isoform 2 of NEK2. Interacts with HSF1; this interaction occurs in mitosis. In terms of processing, phosphorylated on multiple serine residues. The level of phosphorylation varies during the cell cycle and is highest during mitosis. Phosphorylation abolishes interaction with MAD1L1 and reduces interaction with CDC20. Phosphorylated by NEK2.

Its subcellular location is the nucleus. It localises to the chromosome. The protein resides in the centromere. The protein localises to the kinetochore. It is found in the cytoplasm. Its subcellular location is the cytoskeleton. It localises to the spindle pole. Its function is as follows. Component of the spindle-assembly checkpoint that prevents the onset of anaphase until all chromosomes are properly aligned at the metaphase plate. In the closed conformation (C-MAD2) forms a heterotetrameric complex with MAD1L1 at unattached kinetochores during prometaphase, and recruits an open conformation of MAD2L1 (O-MAD2) which then promotes the conversion of O-MAD2 to C-MAD2. Required for the execution of the mitotic checkpoint which monitors the process of kinetochore-spindle attachment and inhibits the activity of the anaphase promoting complex by sequestering CDC20 until all chromosomes are aligned at the metaphase plate. The polypeptide is Mitotic spindle assembly checkpoint protein MAD2A (Mad2l1) (Mus musculus (Mouse)).